A 175-amino-acid chain; its full sequence is Large ribosomal subunit protein uL10 (175 aa).

Belongs to the universal ribosomal protein uL10 family. As to quaternary structure, part of the ribosomal stalk of the 50S ribosomal subunit. The N-terminus interacts with L11 and the large rRNA to form the base of the stalk. The C-terminus forms an elongated spine to which L12 dimers bind in a sequential fashion forming a multimeric L10(L12)X complex.

Functionally, forms part of the ribosomal stalk, playing a central role in the interaction of the ribosome with GTP-bound translation factors. This is Large ribosomal subunit protein uL10 from Prochlorococcus marinus (strain MIT 9215).